Here is a 68-residue protein sequence, read N- to C-terminus: Wasabi receptor toxin (68 aa).

An N-terminal signal peptide occupies residues 1–21 (MKYFTLALTLLFLLLINPCKD). A propeptide spanning residues 22–35 (MNFAWAESSEKVER) is cleaved from the precursor. Cystine bridges form between cysteine 44/cysteine 62 and cysteine 48/cysteine 58.

It belongs to the short scorpion toxin superfamily. Potassium channel inhibitor kappa-KTx family. Kappa-KTx 1 subfamily. Monomer. As to expression, expressed by the venom gland.

It localises to the secreted. The protein localises to the host cytoplasm. In terms of biological role, cell-penetrating peptide (CPP) with defensive purpose that induces pain by specifically activating mammalian sensory neuron TRPA1 channels. It non-covalently binds to the same region than other TRPA1 agonists (irritants), but acts via a distinct biochemical mechanism. Its binding stabilizes the TRPA1 open state and diminishes calcium-permeability. Consequently, it produces pain and pain hypersensitivity, but fails to trigger efferent release of neuropeptides (CGRP) and neurogenic inflammation typically produced by noxious electrophiles. Is not active on voltage-gated potassium channels and other TRP channels. In Urodacus manicatus (Black rock scorpion), this protein is Wasabi receptor toxin.